Reading from the N-terminus, the 255-residue chain is Homeobox protein DLX-1 (255 aa).

A compositionally biased stretch (polar residues) spans 1 to 14; it reads MTMTTMPESLNSPV. Disordered stretches follow at residues 1 to 38 and 95 to 118; these read MTMT…MSHG and SLAQ…EGGE. Residues 25 to 36 show a composition bias toward low complexity; it reads PPNQQMSPSPMS. Basic and acidic residues predominate over residues 100–112; the sequence is RLEDPGADSEKST. Positions 128-187 form a DNA-binding region, homeobox; sequence IRKPRTIYSSLQLQALNRRFQQTQYLALPERAELAASLGLTQTQVKIWFQNKRSKFKKLM. The segment at 204-230 is disordered; that stretch reads ALSAGSPPVPPGWNPNSSSGKGSGGNA.

The protein belongs to the distal-less homeobox family. As to quaternary structure, interacts with SMAD4 (via homeobox DNA-binding domain). Interacts (via homeobox DNA-binding domain) with POU4F2; this interaction suppresses DLX1-mediated transcriptional activity in postnatal retina and enhances retinal ganglion cell (RGC) differentiation. Expressed in hematopoietic cell lines.

It localises to the nucleus. Its function is as follows. Plays a role as a transcriptional activator or repressor. Inhibits several cytokine signaling pathways, such as TGFB1, activin-A/INHBA and BMP4 by interfering with the transcriptional stimulatory activity of transcription factors, such as MSX2, FAST2, SMAD2 and SMAD3 during hematopoietic cell differentiation. Plays a role in terminal differentiation of interneurons, such as amacrine and bipolar cells in the developing retina. Likely to play a regulatory role in the development of the ventral forebrain. May play a role in craniofacial patterning and morphogenesis and may be involved in the early development of diencephalic subdivisions. This chain is Homeobox protein DLX-1 (DLX1), found in Homo sapiens (Human).